The following is a 150-amino-acid chain: MPSILLINGPNLNLLGTREPHLYGSTTLPQLEDNAKALAASKGVKLESFQSNHEGQIVDRIHEARGHTDAIIINPGAFTHTSVAIRDALIGVSIPFIEVHITNVHAREEFRHHSYLSDKAAACIIGLGTYGYEAAIEYAVREIISAKYVY.

The Proton acceptor role is filled by Y23. Positions 74, 80, and 87 each coordinate substrate. H100 (proton donor) is an active-site residue. Substrate is bound by residues 101–102 (IT) and R111.

Belongs to the type-II 3-dehydroquinase family. As to quaternary structure, homododecamer. Adopts a ring-like structure, composed of an arrangement of two hexameric rings stacked on top of one another.

The catalysed reaction is 3-dehydroquinate = 3-dehydroshikimate + H2O. The protein operates within aromatic compound metabolism; 3,4-dihydroxybenzoate biosynthesis; 3,4-dihydroxybenzoate from 3-dehydroquinate: step 1/2. Functionally, is involved in the catabolism of quinate. Allows the utilization of quinate as carbon source via the beta-ketoadipate pathway. The chain is Catabolic 3-dehydroquinase 2 from Neosartorya fischeri (strain ATCC 1020 / DSM 3700 / CBS 544.65 / FGSC A1164 / JCM 1740 / NRRL 181 / WB 181) (Aspergillus fischerianus).